Here is a 56-residue protein sequence, read N- to C-terminus: Lantibiotic subtilin (56 aa).

A propeptide spanning residues 1–24 is cleaved from the precursor; the sequence is MSKFDDFDLDVVKVSKQDSKITPQ. Trp-25 carries the post-translational modification N2-succinyltryptophan; partial. Residues 27–31 constitute a cross-link (lanthionine (Ser-Cys)); that stretch reads SESLC. The residue at position 29 (Ser-29) is a 2,3-didehydroalanine (Ser). 4 consecutive cross-links (beta-methyllanthionine (Thr-Cys)) follow at residues 32 to 35, 37 to 43, 47 to 50, and 49 to 52; these read TPGC, TGALQTC, TLTC, and TCNC. (Z)-2,3-didehydrobutyrine is present on Thr-42. At Ser-55 the chain carries 2,3-didehydroalanine (Ser).

Belongs to the type A lantibiotic family. Post-translationally, maturation of lantibiotics involves the enzymatic conversion of Thr, and Ser into dehydrated AA and the formation of thioether bonds with cysteine. This is followed by membrane translocation and cleavage of the modified precursor. Succinylated subtilin is 10-20 times less active than subtilin. The ratio subtilin/succinylated subtilin is about 1:2 after 24 hours growth. In terms of processing, the 2,3-didehydrobutyrine is determined to be the Z-isomer.

Lanthionine-containing peptide antibiotic (lantibiotic) active on Gram-positive bacteria. The bactericidal activity of lantibiotics is based on depolarization of energized bacterial cytoplasmic membranes, initiated by the formation of aqueous transmembrane pores. This is Lantibiotic subtilin (spaS) from Bacillus subtilis.